The following is a 285-amino-acid chain: Pantothenate synthetase (285 aa).

30 to 37 lines the ATP pocket; the sequence is MGNLHDGH. The active-site Proton donor is H37. Residue Q61 coordinates (R)-pantoate. Q61 is a binding site for beta-alanine. 149–152 lines the ATP pocket; it reads GEKD. Q155 serves as a coordination point for (R)-pantoate. ATP-binding positions include I178 and 186-189; that span reads FSSR.

The protein belongs to the pantothenate synthetase family. In terms of assembly, homodimer.

It localises to the cytoplasm. It catalyses the reaction (R)-pantoate + beta-alanine + ATP = (R)-pantothenate + AMP + diphosphate + H(+). It functions in the pathway cofactor biosynthesis; (R)-pantothenate biosynthesis; (R)-pantothenate from (R)-pantoate and beta-alanine: step 1/1. Catalyzes the condensation of pantoate with beta-alanine in an ATP-dependent reaction via a pantoyl-adenylate intermediate. The protein is Pantothenate synthetase of Buchnera aphidicola subsp. Schizaphis graminum (strain Sg).